The following is a 1171-amino-acid chain: DNA-directed RNA polymerase subunit beta (1171 aa).

The protein belongs to the RNA polymerase beta chain family. In terms of assembly, the RNAP catalytic core consists of 2 alpha, 1 beta, 1 beta' and 1 omega subunit. When a sigma factor is associated with the core the holoenzyme is formed, which can initiate transcription.

The catalysed reaction is RNA(n) + a ribonucleoside 5'-triphosphate = RNA(n+1) + diphosphate. Its function is as follows. DNA-dependent RNA polymerase catalyzes the transcription of DNA into RNA using the four ribonucleoside triphosphates as substrates. The chain is DNA-directed RNA polymerase subunit beta from Corynebacterium efficiens (strain DSM 44549 / YS-314 / AJ 12310 / JCM 11189 / NBRC 100395).